A 283-amino-acid chain; its full sequence is Probable protein phosphatase 2C 58 (283 aa).

Positions 35–282 constitute a PPM-type phosphatase domain; it reads THGFHCVKGK…DDISCIVVKF (248 aa). Residues Asp72, Gly73, Asp234, and Asp273 each coordinate Mn(2+).

This sequence belongs to the PP2C family. The cofactor is Mg(2+). Mn(2+) is required as a cofactor.

It carries out the reaction O-phospho-L-seryl-[protein] + H2O = L-seryl-[protein] + phosphate. The catalysed reaction is O-phospho-L-threonyl-[protein] + H2O = L-threonyl-[protein] + phosphate. The polypeptide is Probable protein phosphatase 2C 58 (Arabidopsis thaliana (Mouse-ear cress)).